A 550-amino-acid polypeptide reads, in one-letter code: Arginine--tRNA ligase (550 aa).

Residues 130 to 140 (ANPTGPIHIGG) carry the 'HIGH' region motif.

The protein belongs to the class-I aminoacyl-tRNA synthetase family. In terms of assembly, monomer.

It is found in the cytoplasm. The catalysed reaction is tRNA(Arg) + L-arginine + ATP = L-arginyl-tRNA(Arg) + AMP + diphosphate. This Mycobacterium ulcerans (strain Agy99) protein is Arginine--tRNA ligase.